A 391-amino-acid polypeptide reads, in one-letter code: MVKIGVLLMNLGGPERITDVGPFLYNLFSDPEIIRTPFPVFQKPLAWLISTLRSTTSQQAYLSIGGGSPIRRITEQQARELQSKLREKGFNATTYIAMRYWHPFTESAIADMKADGIDQVVVIPLYPHFSISTSGSSFRELKKLRDSDDEFKKVPMRCVRSWFSQSGYLKSMVELISEQISLCESPSKAHIFFTAHGVPKSYVEEAGDPYKQQIEDCSLLIINELEKCLGYSNPHTLSYQSRVGPVEWLKPYTEEVLADLGRSNVNDLVVVPISFVGEHIETLQEIDIEYKEIAEKAGIKNFRRVKALNTHPTFIEGLSDLVISCLEGPLVNIEEASQLPEKVKLYPQEKWQWGWNNSSEVWNGRVAMIIFLVLFIELISGSGPLHKLGIL.

Fe cation-binding residues include His196 and Glu281.

Belongs to the ferrochelatase family.

The protein resides in the cytoplasm. It carries out the reaction heme b + 2 H(+) = protoporphyrin IX + Fe(2+). It participates in porphyrin-containing compound metabolism; protoheme biosynthesis; protoheme from protoporphyrin-IX: step 1/1. Functionally, catalyzes the ferrous insertion into protoporphyrin IX. In Prochlorococcus marinus (strain MIT 9301), this protein is Ferrochelatase.